Consider the following 170-residue polypeptide: Urease accessory protein UreE (170 aa).

Positions 137-170 (PFDPESGAYAHAGREQSHAHSHEHSHADGHTHAH) are disordered. The segment covering 148–170 (AGREQSHAHSHEHSHADGHTHAH) has biased composition (basic and acidic residues).

It belongs to the UreE family.

It localises to the cytoplasm. In terms of biological role, involved in urease metallocenter assembly. Binds nickel. Probably functions as a nickel donor during metallocenter assembly. The protein is Urease accessory protein UreE of Pseudoalteromonas translucida (strain TAC 125).